Reading from the N-terminus, the 425-residue chain is ATP-dependent RNA helicase RhlB (425 aa).

Residues 9-37 carry the Q motif motif; that stretch reads TRFADLALHPKIQQAISSAGFEYCTPIQA. The Helicase ATP-binding domain occupies 40-218; that stretch reads LPVALSNRDV…YEHMNAPTKL (179 aa). 53–60 serves as a coordination point for ATP; it reads AQTGTGKT. The DEAD box signature appears at 164–167; the sequence is DEAD. Positions 242-389 constitute a Helicase C-terminal domain; sequence KFPLLLTLIE…VTKYDGDALL (148 aa). The tract at residues 391 to 425 is disordered; that stretch reads DLRRPRPIQRRRRHNSGGGKGKPRGRRSGPPRNAS. Positions 395-419 are enriched in basic residues; it reads PRPIQRRRRHNSGGGKGKPRGRRSG.

It belongs to the DEAD box helicase family. RhlB subfamily. As to quaternary structure, component of the RNA degradosome, which is a multiprotein complex involved in RNA processing and mRNA degradation.

It is found in the cytoplasm. The catalysed reaction is ATP + H2O = ADP + phosphate + H(+). In terms of biological role, DEAD-box RNA helicase involved in RNA degradation. Has RNA-dependent ATPase activity and unwinds double-stranded RNA. The sequence is that of ATP-dependent RNA helicase RhlB from Idiomarina loihiensis (strain ATCC BAA-735 / DSM 15497 / L2-TR).